A 452-amino-acid polypeptide reads, in one-letter code: MASQEHPNWLTALLADTRPPPKLFAWSPANIQPKLDEGIDMGSSNSDEEYDNDACVCPSTDSDQRIYIIGPGNIGRLYATHMARHPNALPITLVVHRKELLSQWAACEGVGLADLTSGKIFLNKRFTVEWWTETRPPYGPVKEVADGKKLHNVFISTKAEAGLSEADRIRRYLGRCSSVVFAQNGVCKLWPPHGPLYISHRYPSGDTPTFSACVVSHGVASAGPFLSVHAAPADAYIGPVFWASDPESPWRQPSDDFFIRHIATTPLVNTKQVSSGEIWLLQLEKLVMNAAINPLTALLRYKTGELFTSYGSDDPLARVIDKLLWQTSAVIQGLIDHETSHSVITSYAEQMSQPGTSCSVPKVRKKLTERFSQPILKAKLYAFGLKIFEHRSSMLQDIEAGRKTEIRDFNGWIVDTACFLGTGLDVSVHSGLTGLIERCERFDKMELGRALL.

70-75 (GPGNIG) is a binding site for NADP(+). Lys285 serves as the catalytic Proton donor. Residues Asn289, Asn293, and Ser393 each coordinate substrate. An NADP(+)-binding site is contributed by Glu405.

Belongs to the ketopantoate reductase family.

It catalyses the reaction (R)-2-hydroxy-3-methylbutanoate + NADP(+) = 3-methyl-2-oxobutanoate + NADPH + H(+). Its function is as follows. Ketoisovalerate reductase; part of the gene cluster that mediates the biosynthesis of beauvericin (BEA), a non-ribosomal cyclic hexadepsipeptide that shows antibiotic, antifungal, insecticidal, and cancer cell antiproliferative and antihaptotactic activity. Ketoisovalerate reductase BEA2 catalyzes the NADPH-specific reduction of ketoisovaleric acid to hydroxyisovalerate, a precursor for beauvericin biosynthesis. The nonribosomal cyclodepsipeptide synthetase BEA1 then catalyzes the formation of beauvericin via condensation and cyclization of 3 dipeptidol monomers, each composed of one unit of hydroxyisovalerate and one unit of N-methyl-phenylalanine. In Gibberella fujikuroi (strain CBS 195.34 / IMI 58289 / NRRL A-6831) (Bakanae and foot rot disease fungus), this protein is Ketoisovalerate reductase BEA2.